The chain runs to 392 residues: Bone morphogenetic protein 15 (392 aa).

The signal sequence occupies residues Met-1 to Phe-18. Positions Met-19 to Arg-267 are excised as a propeptide. Asn-87, Asn-147, and Asn-237 each carry an N-linked (GlcNAc...) asparagine glycan. The residue at position 268 (Gln-268) is a Pyrrolidone carboxylic acid; in P16 and P17. Ser-273 carries the post-translational modification Phosphoserine; in P16. O-linked (HexNAc...) threonine; in P17 glycosylation occurs at Thr-277. Intrachain disulfides connect Cys-291–Cys-357, Cys-320–Cys-389, and Cys-324–Cys-391. N-linked (GlcNAc...) asparagine glycosylation is present at Asn-373.

It belongs to the TGF-beta family. Homodimer. But, in contrast to other members of this family, cannot be disulfide-linked.

It is found in the secreted. Functionally, may be involved in follicular development. Oocyte-specific growth/differentiation factor that stimulates folliculogenesis and granulosa cell (GC) growth. The chain is Bone morphogenetic protein 15 (BMP15) from Homo sapiens (Human).